The following is a 477-amino-acid chain: Argininosuccinate lyase (477 aa).

Belongs to the lyase 1 family. Argininosuccinate lyase subfamily.

Its subcellular location is the cytoplasm. It catalyses the reaction 2-(N(omega)-L-arginino)succinate = fumarate + L-arginine. It participates in amino-acid biosynthesis; L-arginine biosynthesis; L-arginine from L-ornithine and carbamoyl phosphate: step 3/3. The chain is Argininosuccinate lyase from Acinetobacter baumannii (strain ACICU).